The chain runs to 177 residues: Nucleoside triphosphate/diphosphate phosphatase (177 aa).

The active-site Proton donor is arginine 23. The Mg(2+) site is built by asparagine 87, aspartate 103, aspartate 105, aspartate 107, aspartate 120, and glutamate 123.

This sequence belongs to the Ntdp family. The cofactor is Mg(2+).

It catalyses the reaction a ribonucleoside 5'-triphosphate + H2O = a ribonucleoside 5'-diphosphate + phosphate + H(+). The catalysed reaction is a ribonucleoside 5'-diphosphate + H2O = a ribonucleoside 5'-phosphate + phosphate + H(+). Functionally, has nucleoside phosphatase activity towards nucleoside triphosphates and nucleoside diphosphates. This is Nucleoside triphosphate/diphosphate phosphatase from Streptococcus agalactiae serotype Ia (strain ATCC 27591 / A909 / CDC SS700).